We begin with the raw amino-acid sequence, 268 residues long: Nickel import ATP-binding protein NikE (268 aa).

Positions 4–252 (LNVSDLSHHY…SSDAGRVLQN (249 aa)) constitute an ABC transporter domain. 45–52 (GRSGCGKS) contributes to the ATP binding site.

Belongs to the ABC transporter superfamily. Nickel importer (TC 3.A.1.5.3) family. The complex is composed of two ATP-binding proteins (NikD and NikE), two transmembrane proteins (NikB and NikC) and a solute-binding protein (NikA).

It localises to the cell inner membrane. The enzyme catalyses Ni(2+)(out) + ATP + H2O = Ni(2+)(in) + ADP + phosphate + H(+). Part of the ABC transporter complex NikABCDE involved in nickel import. Responsible for energy coupling to the transport system. The sequence is that of Nickel import ATP-binding protein NikE from Escherichia coli O6:K15:H31 (strain 536 / UPEC).